Reading from the N-terminus, the 167-residue chain is UPF0225 protein VP1145 (167 aa).

It belongs to the UPF0225 family.

In Vibrio parahaemolyticus serotype O3:K6 (strain RIMD 2210633), this protein is UPF0225 protein VP1145.